The following is a 247-amino-acid chain: 2-dehydro-3-deoxy-phosphogluconate aldolase (247 aa).

It belongs to the DagF family.

It catalyses the reaction 2-dehydro-3-deoxy-6-phospho-D-gluconate = D-glyceraldehyde 3-phosphate + pyruvate. Functionally, involved in the catabolism of D-glucosaminate. Catalyzes the conversion of keto-3-deoxygluconate 6-phosphate (KDGP) to yield pyruvate and glyceraldehyde-3-phosphate. The protein is 2-dehydro-3-deoxy-phosphogluconate aldolase of Salmonella typhimurium (strain 14028s / SGSC 2262).